Reading from the N-terminus, the 552-residue chain is Glutamine--tRNA ligase (552 aa).

The 'HIGH' region signature appears at 34–44 (PEPNGYLHIGH). ATP contacts are provided by residues 35–37 (EPN) and 41–47 (HIGHAKS). Positions 67 and 212 each coordinate L-glutamine. ATP-binding positions include threonine 231, 261–262 (RL), and 269–271 (MSK). The 'KMSKS' region signature appears at 268–272 (IMSKR).

This sequence belongs to the class-I aminoacyl-tRNA synthetase family. As to quaternary structure, monomer.

The protein localises to the cytoplasm. It carries out the reaction tRNA(Gln) + L-glutamine + ATP = L-glutaminyl-tRNA(Gln) + AMP + diphosphate. In Pectobacterium atrosepticum (strain SCRI 1043 / ATCC BAA-672) (Erwinia carotovora subsp. atroseptica), this protein is Glutamine--tRNA ligase.